We begin with the raw amino-acid sequence, 585 residues long: Protein FAM151A (585 aa).

The chain crosses the membrane as a helical span at residues 14–34; it reads WVFASITCVSAVAIAAIVLAI.

It belongs to the menorin family.

It is found in the membrane. The polypeptide is Protein FAM151A (FAM151A) (Pongo abelii (Sumatran orangutan)).